Consider the following 345-residue polypeptide: GTP cyclohydrolase-2 (345 aa).

The disordered stretch occupies residues 1–27 (MTIDNYDNSKQDSSKYEVSGTGDGRNG). 143–147 (RIHSE) lines the GTP pocket. Residues Cys-148, Cys-159, and Cys-161 each contribute to the Zn(2+) site. GTP contacts are provided by residues Gln-164, 197–199 (EGR), and Thr-219. The active-site Proton acceptor is Asp-231. Arg-233 (nucleophile) is an active-site residue. GTP is bound by residues Thr-254 and Lys-259. The interval 312 to 345 (PLKLHTNPQPTETSEAQNQNRMNSALSSTSTLAI) is disordered. The segment covering 317–345 (TNPQPTETSEAQNQNRMNSALSSTSTLAI) has biased composition (polar residues).

The protein belongs to the GTP cyclohydrolase II family. Zn(2+) is required as a cofactor.

The enzyme catalyses GTP + 4 H2O = 2,5-diamino-6-hydroxy-4-(5-phosphoribosylamino)-pyrimidine + formate + 2 phosphate + 3 H(+). Its pathway is cofactor biosynthesis; riboflavin biosynthesis; 5-amino-6-(D-ribitylamino)uracil from GTP: step 1/4. In terms of biological role, catalyzes the conversion of GTP to 2,5-diamino-6-ribosylamino-4(3H)-pyrimidinone 5'-phosphate (DARP), formate and pyrophosphate. In Saccharomyces cerevisiae (strain ATCC 204508 / S288c) (Baker's yeast), this protein is GTP cyclohydrolase-2 (RIB1).